A 506-amino-acid chain; its full sequence is Protein EFFECTOR OF TRANSCRIPTION 1 (506 aa).

One can recognise a GIY-YIG domain in the interval 185 to 225 (AFQGLYELSHDHGRKDDVLVANLGQPESIRSRLRSYSRSFA). Over residues 234–247 (LSQTILPTTQNKSD) the composition is skewed to polar residues. The interval 234-298 (LSQTILPTTQ…VSEKHDDIVD (65 aa)) is disordered. Residues 248-272 (NQTEEKKSDSEEEREVSSDAAEKES) are compositionally biased toward basic and acidic residues. Positions 273–288 (NSLPSILRLSRSRPQP) are enriched in low complexity. 2 Cx9Cx9RCx2HK repeats span residues 306–331 (CGVL…TEHK) and 361–386 (CGVI…EDHK). The span at 404–413 (KAVNEDKSKP) shows a compositional bias: basic and acidic residues. The segment at 404 to 426 (KAVNEDKSKPETSTGMNQEGSGL) is disordered. Positions 414-423 (ETSTGMNQEG) are enriched in polar residues. Cx9Cx9RCx2HK repeat units follow at residues 428–453 (CEAT…WQHK) and 475–500 (CGFK…EEHK).

In terms of tissue distribution, expressed in rosette leaves, stipules, stems, flowers, siliques and mature seeds. Expressed in the vascular bundles of xylem in shoot parenchyma cells. Expressed in the remnant cytoplasm of differentiated fiber cells and in protoxylem element of parenchymal cells.

It localises to the cytoplasm. The protein resides in the nucleus. Its function is as follows. Transcriptional regulator involved in the regulation of cell differentiation in meristems. Binds DNA without sequence preference. This Arabidopsis thaliana (Mouse-ear cress) protein is Protein EFFECTOR OF TRANSCRIPTION 1.